The sequence spans 157 residues: Endoribonuclease YbeY (157 aa).

3 residues coordinate Zn(2+): His-122, His-126, and His-132.

The protein belongs to the endoribonuclease YbeY family. It depends on Zn(2+) as a cofactor.

It localises to the cytoplasm. Its function is as follows. Single strand-specific metallo-endoribonuclease involved in late-stage 70S ribosome quality control and in maturation of the 3' terminus of the 16S rRNA. The sequence is that of Endoribonuclease YbeY from Bacillus subtilis (strain 168).